The following is a 325-amino-acid chain: Flavin-dependent thymidylate synthase (325 aa).

One can recognise a ThyX domain in the interval 12-267 (ISVRLLEYTG…PRLFRWAGPS (256 aa)). Residues Ser-65, 89–91 (RHR), and Gln-97 contribute to the FAD site. Residues 86–89 (QLVR) and 97–101 (QLSHR) contribute to the dUMP site. Residues 89 to 99 (RHRVASYTQLS) carry the ThyX motif motif. The tract at residues 110 to 159 (AALKACESIGLDCPSKPAETEGGRKAAYRLYSQALERAARDFGASERFAI) is insert. Arg-205 contacts dUMP. 221–223 (NAR) lines the FAD pocket. Arg-233 provides a ligand contact to dUMP. Catalysis depends on Arg-233, which acts as the Involved in ionization of N3 of dUMP, leading to its activation.

This sequence belongs to the thymidylate synthase ThyX family. As to quaternary structure, homotetramer. The cofactor is FAD.

The catalysed reaction is dUMP + (6R)-5,10-methylene-5,6,7,8-tetrahydrofolate + NADPH + H(+) = dTMP + (6S)-5,6,7,8-tetrahydrofolate + NADP(+). It participates in pyrimidine metabolism; dTTP biosynthesis. Catalyzes the reductive methylation of 2'-deoxyuridine-5'-monophosphate (dUMP) to 2'-deoxythymidine-5'-monophosphate (dTMP) while utilizing 5,10-methylenetetrahydrofolate (mTHF) as the methyl donor, and NADPH and FADH(2) as the reductant. The sequence is that of Flavin-dependent thymidylate synthase from Aeropyrum pernix (strain ATCC 700893 / DSM 11879 / JCM 9820 / NBRC 100138 / K1).